Reading from the N-terminus, the 734-residue chain is Photosystem I P700 chlorophyll a apoprotein A2 (734 aa).

A run of 8 helical transmembrane segments spans residues 46-69, 135-158, 175-199, 273-291, 330-353, 369-395, 417-439, and 517-535; these read IFASHFGQLAIIFLWTSGNLFHVA, LYTGALFLLFLSALSLIGGWLHLQ, LNHHLSGLFGVSSLAWTGHLVHVAI, MAHHHLAIAILFLIAGHMY, IHFQLGLALASLGVITSLVAQHMY, AALYTHHQYIAGFIMTGAFAHGAIFFI, AIISHLSWASLFLGFHTLGLYVH, and FLVHHAIALGLHTTTLILV. Residues Cys559 and Cys568 each coordinate [4Fe-4S] cluster. 2 helical membrane passes run 575 to 596 and 643 to 665; these read AFYLAVFWMLNTIGWVTFYWHW and LSVWAWMFLFGHLVWATGFMFLI. His654, Met662, and Tyr670 together coordinate chlorophyll a. Trp671 is a binding site for phylloquinone. Residues 707–727 form a helical membrane-spanning segment; it reads LVGLAHFSVGYIFTYAAFLIA.

This sequence belongs to the PsaA/PsaB family. The PsaA/B heterodimer binds the P700 chlorophyll special pair and subsequent electron acceptors. PSI consists of a core antenna complex that captures photons, and an electron transfer chain that converts photonic excitation into a charge separation. The eukaryotic PSI reaction center is composed of at least 11 subunits. The cofactor is P700 is a chlorophyll a/chlorophyll a' dimer, A0 is one or more chlorophyll a, A1 is one or both phylloquinones and FX is a shared 4Fe-4S iron-sulfur center..

It is found in the plastid. It localises to the chloroplast thylakoid membrane. The catalysed reaction is reduced [plastocyanin] + hnu + oxidized [2Fe-2S]-[ferredoxin] = oxidized [plastocyanin] + reduced [2Fe-2S]-[ferredoxin]. Functionally, psaA and PsaB bind P700, the primary electron donor of photosystem I (PSI), as well as the electron acceptors A0, A1 and FX. PSI is a plastocyanin-ferredoxin oxidoreductase, converting photonic excitation into a charge separation, which transfers an electron from the donor P700 chlorophyll pair to the spectroscopically characterized acceptors A0, A1, FX, FA and FB in turn. Oxidized P700 is reduced on the lumenal side of the thylakoid membrane by plastocyanin. The sequence is that of Photosystem I P700 chlorophyll a apoprotein A2 from Lobularia maritima (Sweet alyssum).